A 25-amino-acid polypeptide reads, in one-letter code: SVYYGSIEAGGTKFVLAIADEHFNI.

It belongs to the ROK (NagC/XylR) family. As to quaternary structure, homodimer. Mg(2+) serves as cofactor.

The catalysed reaction is D-fructose + ATP = D-fructose 6-phosphate + ADP + H(+). Inhibition by zinc ions (Potential). Inactivated by EDTA. In Lactococcus lactis subsp. lactis (Streptococcus lactis), this protein is Fructokinase-1.